Here is a 620-residue protein sequence, read N- to C-terminus: 1-deoxy-D-xylulose-5-phosphate synthase (620 aa).

Residues H75 and 116 to 118 contribute to the thiamine diphosphate site; that span reads AHS. D147 lines the Mg(2+) pocket. Thiamine diphosphate contacts are provided by residues 148 to 149, N177, Y284, and E366; that span reads GA. N177 is a binding site for Mg(2+).

This sequence belongs to the transketolase family. DXPS subfamily. Homodimer. Mg(2+) serves as cofactor. The cofactor is thiamine diphosphate.

The enzyme catalyses D-glyceraldehyde 3-phosphate + pyruvate + H(+) = 1-deoxy-D-xylulose 5-phosphate + CO2. It participates in metabolic intermediate biosynthesis; 1-deoxy-D-xylulose 5-phosphate biosynthesis; 1-deoxy-D-xylulose 5-phosphate from D-glyceraldehyde 3-phosphate and pyruvate: step 1/1. Catalyzes the acyloin condensation reaction between C atoms 2 and 3 of pyruvate and glyceraldehyde 3-phosphate to yield 1-deoxy-D-xylulose-5-phosphate (DXP). The polypeptide is 1-deoxy-D-xylulose-5-phosphate synthase (Bordetella bronchiseptica (strain ATCC BAA-588 / NCTC 13252 / RB50) (Alcaligenes bronchisepticus)).